The chain runs to 429 residues: Serine--tRNA ligase (429 aa).

Position 236 to 238 (236 to 238 (TGE)) interacts with L-serine. 267–269 (RSE) provides a ligand contact to ATP. Position 290 (Glu-290) interacts with L-serine. An ATP-binding site is contributed by 354-357 (EISS). Residue Ser-390 coordinates L-serine.

The protein belongs to the class-II aminoacyl-tRNA synthetase family. Type-1 seryl-tRNA synthetase subfamily. As to quaternary structure, homodimer. The tRNA molecule binds across the dimer.

The protein localises to the cytoplasm. It catalyses the reaction tRNA(Ser) + L-serine + ATP = L-seryl-tRNA(Ser) + AMP + diphosphate + H(+). The catalysed reaction is tRNA(Sec) + L-serine + ATP = L-seryl-tRNA(Sec) + AMP + diphosphate + H(+). It functions in the pathway aminoacyl-tRNA biosynthesis; selenocysteinyl-tRNA(Sec) biosynthesis; L-seryl-tRNA(Sec) from L-serine and tRNA(Sec): step 1/1. In terms of biological role, catalyzes the attachment of serine to tRNA(Ser). Is also able to aminoacylate tRNA(Sec) with serine, to form the misacylated tRNA L-seryl-tRNA(Sec), which will be further converted into selenocysteinyl-tRNA(Sec). The polypeptide is Serine--tRNA ligase (Vesicomyosocius okutanii subsp. Calyptogena okutanii (strain HA)).